The sequence spans 280 residues: 3-methyl-2-oxobutanoate hydroxymethyltransferase (280 aa).

Residues Asp-60 and Asp-99 each contribute to the Mg(2+) site. 3-methyl-2-oxobutanoate is bound by residues 60–61 (DS), Asp-99, and Lys-129. A Mg(2+)-binding site is contributed by Glu-131. The Proton acceptor role is filled by Glu-198.

Belongs to the PanB family. Homodecamer; pentamer of dimers. The cofactor is Mg(2+).

The protein localises to the cytoplasm. It catalyses the reaction 3-methyl-2-oxobutanoate + (6R)-5,10-methylene-5,6,7,8-tetrahydrofolate + H2O = 2-dehydropantoate + (6S)-5,6,7,8-tetrahydrofolate. It participates in cofactor biosynthesis; (R)-pantothenate biosynthesis; (R)-pantoate from 3-methyl-2-oxobutanoate: step 1/2. In terms of biological role, catalyzes the reversible reaction in which hydroxymethyl group from 5,10-methylenetetrahydrofolate is transferred onto alpha-ketoisovalerate to form ketopantoate. This Thermobifida fusca (strain YX) protein is 3-methyl-2-oxobutanoate hydroxymethyltransferase.